We begin with the raw amino-acid sequence, 406 residues long: Probable sodium/metabolite cotransporter BASS1, chloroplastic (406 aa).

The transit peptide at methionine 1–arginine 64 directs the protein to the chloroplast. Helical transmembrane passes span valine 98–leucine 118, alanine 123–methionine 143, leucine 152–valine 172, proline 187–valine 209, valine 217–leucine 237, methionine 252–leucine 272, glycine 278–leucine 298, leucine 315–leucine 335, and valine 376–tryptophan 396.

This sequence belongs to the bile acid:sodium symporter (BASS) (TC 2.A.28) family.

It is found in the membrane. The protein localises to the plastid. Its subcellular location is the chloroplast envelope. In terms of biological role, may function as sodium-coupled metabolite transporter across the chloroplast envelope. This Oryza sativa subsp. japonica (Rice) protein is Probable sodium/metabolite cotransporter BASS1, chloroplastic (BASS1).